A 105-amino-acid chain; its full sequence is MQSQKIRIRLKAFDHKLLDQSTKEIVETARRTGAKVAGPIPLPTRINRYTVLRSPHVDKKSREQFEVRTHKRMLDILEPTQQTVDQLMKLDLSAGVDVEIKLSAV.

The protein belongs to the universal ribosomal protein uS10 family. In terms of assembly, part of the 30S ribosomal subunit.

Its function is as follows. Involved in the binding of tRNA to the ribosomes. The polypeptide is Small ribosomal subunit protein uS10 (Bdellovibrio bacteriovorus (strain ATCC 15356 / DSM 50701 / NCIMB 9529 / HD100)).